Consider the following 476-residue polypeptide: Proline--tRNA ligase (476 aa).

It belongs to the class-II aminoacyl-tRNA synthetase family. ProS type 3 subfamily. As to quaternary structure, homodimer.

The protein resides in the cytoplasm. The enzyme catalyses tRNA(Pro) + L-proline + ATP = L-prolyl-tRNA(Pro) + AMP + diphosphate. Catalyzes the attachment of proline to tRNA(Pro) in a two-step reaction: proline is first activated by ATP to form Pro-AMP and then transferred to the acceptor end of tRNA(Pro). The sequence is that of Proline--tRNA ligase from Mycoplasma mobile (strain ATCC 43663 / 163K / NCTC 11711) (Mesomycoplasma mobile).